The following is a 159-amino-acid chain: Phosphopantetheine adenylyltransferase (159 aa).

Residue Thr10 participates in substrate binding. Residues 10 to 11 (TF) and His18 contribute to the ATP site. Lys42, Met74, and Arg88 together coordinate substrate. ATP-binding positions include 89 to 91 (GLR), Glu99, and 124 to 130 (WSFISSS).

This sequence belongs to the bacterial CoaD family. Homohexamer. Mg(2+) is required as a cofactor.

It localises to the cytoplasm. The enzyme catalyses (R)-4'-phosphopantetheine + ATP + H(+) = 3'-dephospho-CoA + diphosphate. It participates in cofactor biosynthesis; coenzyme A biosynthesis; CoA from (R)-pantothenate: step 4/5. Reversibly transfers an adenylyl group from ATP to 4'-phosphopantetheine, yielding dephospho-CoA (dPCoA) and pyrophosphate. The polypeptide is Phosphopantetheine adenylyltransferase (Klebsiella pneumoniae (strain 342)).